A 100-amino-acid chain; its full sequence is Urease subunit gamma (100 aa).

The protein belongs to the urease gamma subunit family. In terms of assembly, heterotrimer of UreA (gamma), UreB (beta) and UreC (alpha) subunits. Three heterotrimers associate to form the active enzyme.

It localises to the cytoplasm. The catalysed reaction is urea + 2 H2O + H(+) = hydrogencarbonate + 2 NH4(+). Its pathway is nitrogen metabolism; urea degradation; CO(2) and NH(3) from urea (urease route): step 1/1. This Azoarcus sp. (strain BH72) protein is Urease subunit gamma.